Here is a 758-residue protein sequence, read N- to C-terminus: 5-methyltetrahydropteroyltriglutamate--homocysteine methyltransferase (758 aa).

5-methyltetrahydropteroyltri-L-glutamate contacts are provided by residues 17 to 20 (RELK) and lysine 117. Residues 434 to 436 (IGS) and glutamate 487 each bind L-homocysteine. L-methionine-binding positions include 434–436 (IGS) and glutamate 487. Residues 518–519 (RC) and tryptophan 564 each bind 5-methyltetrahydropteroyltri-L-glutamate. An L-homocysteine-binding site is contributed by aspartate 602. Aspartate 602 contributes to the L-methionine binding site. Glutamate 608 contacts 5-methyltetrahydropteroyltri-L-glutamate. Residues histidine 644, cysteine 646, and glutamate 668 each coordinate Zn(2+). Catalysis depends on histidine 697, which acts as the Proton donor. Cysteine 729 is a binding site for Zn(2+).

It belongs to the vitamin-B12 independent methionine synthase family. Zn(2+) is required as a cofactor.

It catalyses the reaction 5-methyltetrahydropteroyltri-L-glutamate + L-homocysteine = tetrahydropteroyltri-L-glutamate + L-methionine. The protein operates within amino-acid biosynthesis; L-methionine biosynthesis via de novo pathway; L-methionine from L-homocysteine (MetE route): step 1/1. Functionally, catalyzes the transfer of a methyl group from 5-methyltetrahydrofolate to homocysteine resulting in methionine formation. The polypeptide is 5-methyltetrahydropteroyltriglutamate--homocysteine methyltransferase (Photorhabdus laumondii subsp. laumondii (strain DSM 15139 / CIP 105565 / TT01) (Photorhabdus luminescens subsp. laumondii)).